We begin with the raw amino-acid sequence, 164 residues long: Small ribosomal subunit protein uS5 (164 aa).

The 64-residue stretch at 10 to 73 folds into the S5 DRBM domain; it reads LEERVVAVNR…DDAKKNLIEV (64 aa).

The protein belongs to the universal ribosomal protein uS5 family. Part of the 30S ribosomal subunit. Contacts proteins S4 and S8.

Functionally, with S4 and S12 plays an important role in translational accuracy. Its function is as follows. Located at the back of the 30S subunit body where it stabilizes the conformation of the head with respect to the body. In Streptococcus pneumoniae serotype 2 (strain D39 / NCTC 7466), this protein is Small ribosomal subunit protein uS5.